A 221-amino-acid polypeptide reads, in one-letter code: MLRPVHCVVPFKSSGCKTRLSSALSGEQRWQLAVAMLRDVLRTLRSIGMVTVLARPGMREDIIADLDATLRFSELELGDALNGFIDENTAAGWPADILIVMADLPLIREEDVLEMIRTPGGVVLAPGRGGGTNMILIRDSRFRTRYKGLSFAKHKREAEELGIEAGYCYSYRAGCDIDEPGDLIEILLHTNGESRALLERFGLRILESDGRGRLDQTQSNE.

It belongs to the CofC family. Homodimer.

It catalyses the reaction (2S)-2-phospholactate + GTP + H(+) = (2S)-lactyl-2-diphospho-5'-guanosine + diphosphate. It participates in cofactor biosynthesis; coenzyme F420 biosynthesis. In terms of biological role, guanylyltransferase that catalyzes the activation of (2S)-2-phospholactate (2-PL) as (2S)-lactyl-2-diphospho-5'-guanosine, via the condensation of 2-PL with GTP. It is involved in the biosynthesis of coenzyme F420, a hydride carrier cofactor. In Methanothrix thermoacetophila (strain DSM 6194 / JCM 14653 / NBRC 101360 / PT) (Methanosaeta thermophila), this protein is 2-phospho-L-lactate guanylyltransferase.